The sequence spans 672 residues: DNA ligase (672 aa).

NAD(+) contacts are provided by residues 35–39, 84–85, and glutamate 115; these read DAQYD and SL. The active-site N6-AMP-lysine intermediate is the lysine 117. Residues arginine 138, glutamate 178, lysine 294, and lysine 318 each contribute to the NAD(+) site. Residues cysteine 412, cysteine 415, cysteine 430, and cysteine 435 each coordinate Zn(2+). A BRCT domain is found at 592 to 672; it reads ATGGPFVGKS…AFLQMLQTNA (81 aa).

It belongs to the NAD-dependent DNA ligase family. LigA subfamily. Mg(2+) serves as cofactor. Mn(2+) is required as a cofactor.

It carries out the reaction NAD(+) + (deoxyribonucleotide)n-3'-hydroxyl + 5'-phospho-(deoxyribonucleotide)m = (deoxyribonucleotide)n+m + AMP + beta-nicotinamide D-nucleotide.. DNA ligase that catalyzes the formation of phosphodiester linkages between 5'-phosphoryl and 3'-hydroxyl groups in double-stranded DNA using NAD as a coenzyme and as the energy source for the reaction. It is essential for DNA replication and repair of damaged DNA. This chain is DNA ligase, found in Myxococcus xanthus (strain DK1622).